Consider the following 510-residue polypeptide: ATP synthase subunit alpha, chloroplastic (510 aa).

170–177 is an ATP binding site; that stretch reads GDRQTGKT.

It belongs to the ATPase alpha/beta chains family. F-type ATPases have 2 components, CF(1) - the catalytic core - and CF(0) - the membrane proton channel. CF(1) has five subunits: alpha(3), beta(3), gamma(1), delta(1), epsilon(1). CF(0) has four main subunits: a, b, b' and c.

It is found in the plastid. It localises to the chloroplast thylakoid membrane. The catalysed reaction is ATP + H2O + 4 H(+)(in) = ADP + phosphate + 5 H(+)(out). Its function is as follows. Produces ATP from ADP in the presence of a proton gradient across the membrane. The alpha chain is a regulatory subunit. The protein is ATP synthase subunit alpha, chloroplastic of Phaseolus vulgaris (Kidney bean).